The sequence spans 488 residues: DNA polymerase II small subunit (488 aa).

It belongs to the DNA polymerase delta/II small subunit family. In terms of assembly, heterodimer of a large subunit and a small subunit.

It carries out the reaction DNA(n) + a 2'-deoxyribonucleoside 5'-triphosphate = DNA(n+1) + diphosphate. It catalyses the reaction Exonucleolytic cleavage in the 3'- to 5'-direction to yield nucleoside 5'-phosphates.. Functionally, possesses two activities: a DNA synthesis (polymerase) and an exonucleolytic activity that degrades single-stranded DNA in the 3' to 5' direction. Has a template-primer preference which is characteristic of a replicative DNA polymerase. The polypeptide is DNA polymerase II small subunit (polB) (Archaeoglobus fulgidus (strain ATCC 49558 / DSM 4304 / JCM 9628 / NBRC 100126 / VC-16)).